The chain runs to 208 residues: NAD(P)H-quinone oxidoreductase subunit M, chloroplastic (208 aa).

The N-terminal 21 residues, 1–21, are a transit peptide targeting the chloroplast; sequence MAATSSYTACTKFSMLGWIGG. Residues 37–49 show a composition bias toward low complexity; that stretch reads QQAEVEESQQVNA. The interval 37-70 is disordered; the sequence is QQAEVEESQQVNAQEEEQEKMKQQGKQKLPRPVE.

The protein belongs to the NDH complex subunit M family. In terms of assembly, part of the chloroplast NDH complex, composed of a mixture of chloroplast and nucleus encoded subunits. Component of the NDH subcomplex A, at least composed of ndhH, ndhI, ndhJ, ndhK, ndhL, ndhM, ndhN and ndhO.

It localises to the plastid. It is found in the chloroplast thylakoid membrane. The catalysed reaction is a plastoquinone + NADH + (n+1) H(+)(in) = a plastoquinol + NAD(+) + n H(+)(out). The enzyme catalyses a plastoquinone + NADPH + (n+1) H(+)(in) = a plastoquinol + NADP(+) + n H(+)(out). Its function is as follows. NDH shuttles electrons from NAD(P)H:plastoquinone, via FMN and iron-sulfur (Fe-S) centers, to quinones in the photosynthetic chain and possibly in a chloroplast respiratory chain. The immediate electron acceptor for the enzyme in this species is believed to be plastoquinone. Couples the redox reaction to proton translocation, and thus conserves the redox energy in a proton gradient. This Vitis vinifera (Grape) protein is NAD(P)H-quinone oxidoreductase subunit M, chloroplastic.